The sequence spans 334 residues: Transcription initiation factor IIB (334 aa).

The TFIIB-type zinc-finger motif lies at 34–65 (TESVCPECKSRQLVHDYERAELVCQNCGLVID). Zn(2+) is bound by residues cysteine 38, cysteine 41, cysteine 57, and cysteine 60. Repeat copies occupy residues 151–234 (SELD…SREL) and 245–326 (DYVP…ELAE).

This sequence belongs to the TFIIB family.

Functionally, stabilizes TBP binding to an archaeal box-A promoter. Also responsible for recruiting RNA polymerase II to the pre-initiation complex (DNA-TBP-TFIIB). In Methanosphaerula palustris (strain ATCC BAA-1556 / DSM 19958 / E1-9c), this protein is Transcription initiation factor IIB.